Consider the following 477-residue polypeptide: Pentatricopeptide repeat-containing protein At4g14170 (477 aa).

PPR repeat units lie at residues 65–96 (NVVL…MPYR), 97–131 (NIFS…SCVR), 133–167 (DDFT…GFSS), 168–198 (SLFV…MPVR), 199–233 (DSVL…GFAL), 234–264 (DSVV…CIRR), 269–299 (GLNL…MSRR), 300–334 (DVIS…GIEP), 335–369 (NAVT…NIVP), and 370–400 (ELKH…MPVK). Residues 405-477 (VMGAVLSGCK…ISKVPGCSSI (73 aa)) are type E motif; degenerate.

It belongs to the PPR family. PCMP-E subfamily.

This chain is Pentatricopeptide repeat-containing protein At4g14170 (PCMP-E17), found in Arabidopsis thaliana (Mouse-ear cress).